The primary structure comprises 363 residues: Protein-glutamate methylesterase/protein-glutamine glutaminase 3 (363 aa).

The Response regulatory domain occupies 8-125; it reads KVLCVDDSAL…RDGMLDYAEK (118 aa). At aspartate 59 the chain carries 4-aspartylphosphate. Residues 164–356 enclose the CheB-type methylesterase domain; that stretch reads LVSTEKLIII…RRVMARLATM (193 aa). Active-site residues include serine 176, histidine 202, and aspartate 298.

The protein belongs to the CheB family. Phosphorylated by CheA. Phosphorylation of the N-terminal regulatory domain activates the methylesterase activity.

Its subcellular location is the cytoplasm. The enzyme catalyses [protein]-L-glutamate 5-O-methyl ester + H2O = L-glutamyl-[protein] + methanol + H(+). The catalysed reaction is L-glutaminyl-[protein] + H2O = L-glutamyl-[protein] + NH4(+). Involved in chemotaxis. Part of a chemotaxis signal transduction system that modulates chemotaxis in response to various stimuli. Catalyzes the demethylation of specific methylglutamate residues introduced into the chemoreceptors (methyl-accepting chemotaxis proteins or MCP) by CheR. Also mediates the irreversible deamidation of specific glutamine residues to glutamic acid. This Burkholderia lata (strain ATCC 17760 / DSM 23089 / LMG 22485 / NCIMB 9086 / R18194 / 383) protein is Protein-glutamate methylesterase/protein-glutamine glutaminase 3.